We begin with the raw amino-acid sequence, 211 residues long: Uracil phosphoribosyltransferase (211 aa).

5-phospho-alpha-D-ribose 1-diphosphate-binding positions include arginine 78, arginine 103, and 130-138 (DPMLATGSS). Residues isoleucine 193 and 198–200 (GDA) each bind uracil. Aspartate 199 contacts 5-phospho-alpha-D-ribose 1-diphosphate.

It belongs to the UPRTase family. The cofactor is Mg(2+).

The enzyme catalyses UMP + diphosphate = 5-phospho-alpha-D-ribose 1-diphosphate + uracil. It functions in the pathway pyrimidine metabolism; UMP biosynthesis via salvage pathway; UMP from uracil: step 1/1. Its activity is regulated as follows. Allosterically activated by GTP. Its function is as follows. Catalyzes the conversion of uracil and 5-phospho-alpha-D-ribose 1-diphosphate (PRPP) to UMP and diphosphate. This is Uracil phosphoribosyltransferase from Acinetobacter baylyi (strain ATCC 33305 / BD413 / ADP1).